The chain runs to 62 residues: Translational regulator CsrA (62 aa).

The protein belongs to the CsrA/RsmA family. As to quaternary structure, homodimer; the beta-strands of each monomer intercalate to form a hydrophobic core, while the alpha-helices form wings that extend away from the core.

It localises to the cytoplasm. Functionally, a key translational regulator that binds mRNA to regulate translation initiation and/or mRNA stability. Mediates global changes in gene expression, shifting from rapid growth to stress survival by linking envelope stress, the stringent response and the catabolite repression systems. Usually binds in the 5'-UTR; binding at or near the Shine-Dalgarno sequence prevents ribosome-binding, repressing translation, binding elsewhere in the 5'-UTR can activate translation and/or stabilize the mRNA. Its function is antagonized by small RNA(s). The chain is Translational regulator CsrA from Pasteurella multocida (strain Pm70).